The sequence spans 375 residues: Histidine biosynthesis bifunctional protein HisB (375 aa).

The histidinol-phosphatase stretch occupies residues 1–168; the sequence is MTPIVFIDRD…GIAHTLADAP (168 aa). Residue aspartate 8 is the Nucleophile of the active site. The Mg(2+) site is built by aspartate 8, aspartate 10, and aspartate 128. Catalysis depends on aspartate 10, which acts as the Proton donor. The tract at residues 169–375 is imidazoleglycerol-phosphate dehydratase; it reads RRAVVQRHTK…HVLPSTKGAL (207 aa).

It in the N-terminal section; belongs to the histidinol-phosphatase family. The protein in the C-terminal section; belongs to the imidazoleglycerol-phosphate dehydratase family. Requires Mg(2+) as cofactor.

Its subcellular location is the cytoplasm. It catalyses the reaction D-erythro-1-(imidazol-4-yl)glycerol 3-phosphate = 3-(imidazol-4-yl)-2-oxopropyl phosphate + H2O. The catalysed reaction is L-histidinol phosphate + H2O = L-histidinol + phosphate. The protein operates within amino-acid biosynthesis; L-histidine biosynthesis; L-histidine from 5-phospho-alpha-D-ribose 1-diphosphate: step 6/9. It functions in the pathway amino-acid biosynthesis; L-histidine biosynthesis; L-histidine from 5-phospho-alpha-D-ribose 1-diphosphate: step 8/9. The sequence is that of Histidine biosynthesis bifunctional protein HisB from Xylella fastidiosa (strain Temecula1 / ATCC 700964).